A 238-amino-acid polypeptide reads, in one-letter code: MATPHINAEMGDFADVVLMPGDPLRAKYIAETFLQDVRQVNNVRGMLGFTGTYKGRKISVMGHGMGIPSCSIYAKELITDFGVKVIIRVGSCGAVLPDVELRDVVIGMGACTDSKVNRLRFKDQDFAAIADFELVQNAVSAAKAKDIKVRVGNIFSADLFYSPDPEMFDVMEKYGILGVEMEAAGIYGVAAEYGARALTICTVSDHIKKGTQTTSEERQTTFNEMIEIALESVLLLED.

Residue His-5 participates in a purine D-ribonucleoside binding. Residues Gly-21, Arg-25, Arg-44, and 88–91 (RVGS) contribute to the phosphate site. A purine D-ribonucleoside-binding positions include 180–182 (EME) and 204–205 (SD). Catalysis depends on Asp-205, which acts as the Proton donor.

This sequence belongs to the PNP/UDP phosphorylase family. In terms of assembly, homohexamer; trimer of homodimers.

The catalysed reaction is a purine D-ribonucleoside + phosphate = a purine nucleobase + alpha-D-ribose 1-phosphate. It carries out the reaction a purine 2'-deoxy-D-ribonucleoside + phosphate = a purine nucleobase + 2-deoxy-alpha-D-ribose 1-phosphate. Functionally, catalyzes the reversible phosphorolytic breakdown of the N-glycosidic bond in the beta-(deoxy)ribonucleoside molecules, with the formation of the corresponding free purine bases and pentose-1-phosphate. The chain is Purine nucleoside phosphorylase DeoD-type from Proteus mirabilis (strain HI4320).